The sequence spans 244 residues: Na(+)-translocating NADH-quinone reductase subunit E (244 aa).

Transmembrane regions (helical) follow at residues 11–31 (LLGIFLQATFIQNILLSTFLG), 47–67 (GLGMSVALVLTITGSINWLIH), 90–110 (FLELITFIVVIAAFTQILELL), 123–143 (GIFLPLIAVNCAILGGVLFGI), 153–173 (VVFSLGSGCGWWLAIVLFATI), and 189–209 (MGISFITTGLIAMAFMGLTGI).

This sequence belongs to the NqrDE/RnfAE family. Composed of six subunits; NqrA, NqrB, NqrC, NqrD, NqrE and NqrF.

Its subcellular location is the cell inner membrane. The enzyme catalyses a ubiquinone + n Na(+)(in) + NADH + H(+) = a ubiquinol + n Na(+)(out) + NAD(+). Its function is as follows. NQR complex catalyzes the reduction of ubiquinone-1 to ubiquinol by two successive reactions, coupled with the transport of Na(+) ions from the cytoplasm to the periplasm. NqrA to NqrE are probably involved in the second step, the conversion of ubisemiquinone to ubiquinol. In Chlamydia muridarum (strain MoPn / Nigg), this protein is Na(+)-translocating NADH-quinone reductase subunit E.